The sequence spans 223 residues: Ribonuclease 3 (223 aa).

The 124-residue stretch at 4-127 folds into the RNase III domain; sequence YSQLEKRLNY…IIGAVYLEAG (124 aa). Glutamate 40 is a Mg(2+) binding site. Residue aspartate 44 is part of the active site. 2 residues coordinate Mg(2+): asparagine 113 and glutamate 116. Glutamate 116 is an active-site residue. The region spanning 154–223 is the DRBM domain; the sequence is DYKTALQELT…AKIALEALKK (70 aa).

Belongs to the ribonuclease III family. As to quaternary structure, homodimer. It depends on Mg(2+) as a cofactor.

The protein resides in the cytoplasm. It carries out the reaction Endonucleolytic cleavage to 5'-phosphomonoester.. Its function is as follows. Digests double-stranded RNA. Involved in the processing of primary rRNA transcript to yield the immediate precursors to the large and small rRNAs (23S and 16S). Processes some mRNAs, and tRNAs when they are encoded in the rRNA operon. Processes pre-crRNA and tracrRNA of type II CRISPR loci if present in the organism. The polypeptide is Ribonuclease 3 (Sulfurovum sp. (strain NBC37-1)).